Reading from the N-terminus, the 116-residue chain is T cell receptor alpha variable 19 (116 aa).

Positions 1 to 21 (MLTASLLRAVIASICVVSSMA) are cleaved as a signal peptide. In terms of domain architecture, Ig-like spans 22-116 (QKVTQAQTEI…SAVYFCALSE (95 aa)). Cys43 and Cys112 form a disulfide bridge. Asn96 is a glycosylation site (N-linked (GlcNAc...) asparagine).

Alpha-beta TR is a heterodimer composed of an alpha and beta chain; disulfide-linked. The alpha-beta TR is associated with the transmembrane signaling CD3 coreceptor proteins to form the TR-CD3 (TcR or TCR). The assembly of alpha-beta TR heterodimers with CD3 occurs in the endoplasmic reticulum where a single alpha-beta TR heterodimer associates with one CD3D-CD3E heterodimer, one CD3G-CD3E heterodimer and one CD247 homodimer forming a stable octameric structure. CD3D-CD3E and CD3G-CD3E heterodimers preferentially associate with TR alpha and TR beta chains, respectively. The association of the CD247 homodimer is the last step of TcR assembly in the endoplasmic reticulum and is required for transport to the cell surface.

It is found in the cell membrane. In terms of biological role, v region of the variable domain of T cell receptor (TR) alpha chain that participates in the antigen recognition. Alpha-beta T cell receptors are antigen specific receptors which are essential to the immune response and are present on the cell surface of T lymphocytes. Recognize peptide-major histocompatibility (MH) (pMH) complexes that are displayed by antigen presenting cells (APC), a prerequisite for efficient T cell adaptive immunity against pathogens. Binding of alpha-beta TR to pMH complex initiates TR-CD3 clustering on the cell surface and intracellular activation of LCK that phosphorylates the ITAM motifs of CD3G, CD3D, CD3E and CD247 enabling the recruitment of ZAP70. In turn ZAP70 phosphorylates LAT, which recruits numerous signaling molecules to form the LAT signalosome. The LAT signalosome propagates signal branching to three major signaling pathways, the calcium, the mitogen-activated protein kinase (MAPK) kinase and the nuclear factor NF-kappa-B (NF-kB) pathways, leading to the mobilization of transcription factors that are critical for gene expression and essential for T cell growth and differentiation. The T cell repertoire is generated in the thymus, by V-(D)-J rearrangement. This repertoire is then shaped by intrathymic selection events to generate a peripheral T cell pool of self-MH restricted, non-autoaggressive T cells. Post-thymic interaction of alpha-beta TR with the pMH complexes shapes TR structural and functional avidity. This Homo sapiens (Human) protein is T cell receptor alpha variable 19.